A 262-amino-acid chain; its full sequence is MATSEELKQLRCDCTYRSKLAEQAERYDEMADAMRTLVEQCVNNDKDELTVEERNLLSVAYKNAVGARRASWRIISSVEQKEMSKANVHNKNVAATYRKKVEEELNNICQDILNLLTKKLIPNTSESESKVFYYKMKGDYYRYISEFSCDEGKKEASNCAQEAYQKATDIAENELPSTHPIRLGLALNYSVFFYEILNQPHQACEMAKRAFDDAITEFDNVSEDSYKDSTLIMQLLRDNLTLWTSDLQGDQTEEKSKDEGLE.

It belongs to the 14-3-3 family. As to quaternary structure, homodimer. Forms a complex composed of CDPK1, PKA regulatory subunit PKAr and 14-3-3I; the complex is formed in merozoites in response to low extracellular level of K(+) and may play a role in microneme secretion. Interacts with CDPK1 (when phosphorylated) in a Ca(2+)-independent manner; the interaction does not regulate CDPK1 catalytic activity but is required for merozoite invasion of host erythrocytes. Interacts with PKA regulatory subunit PKAr (when phosphorylated) in a Ca(2+)-dependent manner. Interacts with histone H3 (when phosphorylated at 'Ser-28' or when phosphorylated at 'Ser-28' and 'Ser-32').

The protein resides in the cell membrane. It is found in the cytoplasm. Its subcellular location is the nucleus. Adapter protein which binds to its partners, usually via a phosphoserine or phosphothreonine motif. Binding generally results in the modulation of the activity and/or cellular localization of the binding partner. Via its interaction with CDPK1 and PKAr, involved in merozoite microneme secretion and thus in merozoite invasion of host erythrocytes. This is 14-3-3 protein I from Plasmodium falciparum (isolate 3D7).